We begin with the raw amino-acid sequence, 628 residues long: MSRQASKTSGGGSQGFSGRSAVVSGSSRMSCVAHSGGAGGGAYGFRSGAGGFGSRSLYNLGGNKSISISVAAGGSRAGGFGGGRSSCAFAGGYGGGFGSGYGGGFGGGFGGGRGMGGGFGGAGGFGGAGGFGGAGGFGGPGGFGGSGGFGGPGSLGSPGGFGPGGFPGGIQEVTINQSLLQPLNVEIDPQIGQVKAQEREQIKTLNNKFASFIDKVRFLEQQNKVLETKWNLLQQQGTSSISGTNNLEPLFENHINYLRSYLDNILGERGRLDSELKNMEDLVEDFKKKYEDEINKRTAAENEFVTLKKDVDSAYMNKVELQAKVDALIDEIDFLRTLYDAELSQMQSHISDTSVVLSMDNNRSLDLDSIIAEVRAQYEDIAQRSKAEAEALYQTKLGELQTTAGRHGDDLRNTKSEIIELNRMIQRLRAEIEGVKKQNANLQTAIAEAEQHGEMALKDANAKLQELQAALQQAKDDLARLLRDYQELMNVKLALDVEIATYRKLLEGEEYRMSGECPSAVSISVVSSSTTSASAGGYGGGYGGGMGGGLGGGFSAGGGSGSGFGRGGGGGIGGGFGGGSSGFSGGSGFGSISGARYGVSGGGFSSASNRGGSIKFSQSSQSSQRYSR.

Residues 1 to 21 (MSRQASKTSGGGSQGFSGRSA) are disordered. The interval 1–197 (MSRQASKTSG…DPQIGQVKAQ (197 aa)) is head. Phosphoserine is present on residues serine 13 and serine 56. Residues 198–233 (EREQIKTLNNKFASFIDKVRFLEQQNKVLETKWNLL) form a coil 1A region. The region spanning 198 to 513 (EREQIKTLNN…KLLEGEEYRM (316 aa)) is the IF rod domain. The segment at 234–254 (QQQGTSSISGTNNLEPLFENH) is linker 1. The interval 255 to 346 (INYLRSYLDN…TLYDAELSQM (92 aa)) is coil 1B. Lysine 296 is subject to N6,N6-dimethyllysine. Residues 347–370 (QSHISDTSVVLSMDNNRSLDLDSI) are linker 12. Serine 364 bears the Phosphoserine mark. Positions 371–509 (IAEVRAQYED…ATYRKLLEGE (139 aa)) are coil 2. A tail region spans residues 510 to 628 (EYRMSGECPS…SSQSSQRYSR (119 aa)). A disordered region spans residues 605 to 628 (SSASNRGGSIKFSQSSQSSQRYSR). Over residues 617–628 (SQSSQSSQRYSR) the composition is skewed to low complexity.

Belongs to the intermediate filament family. Heterotetramer of two type I and two type II keratins. Keratin-3 associates with keratin-12. As to expression, cornea specific.

The chain is Keratin, type II cytoskeletal 3 (KRT3) from Homo sapiens (Human).